Here is a 298-residue protein sequence, read N- to C-terminus: CCR4-NOT transcription complex subunit 9 (298 aa).

Belongs to the CNOT9 family. Homodimer. Component of the CCR4-NOT complex.

The protein localises to the nucleus. It is found in the cytoplasm. Its subcellular location is the P-body. In terms of biological role, component of the CCR4-NOT complex which is one of the major cellular mRNA deadenylases and is linked to various cellular processes including bulk mRNA degradation, miRNA-mediated repression, translational repression during translational initiation and general transcription regulation. Additional complex functions may be a consequence of its influence on mRNA expression. Involved in down-regulation of MYB- and JUN-dependent transcription. Enhances ligand-dependent transcriptional activity of nuclear hormone receptors. May play a role in cell differentiation. This Danio rerio (Zebrafish) protein is CCR4-NOT transcription complex subunit 9.